The primary structure comprises 265 residues: Hydroxyethylthiazole kinase (265 aa).

A substrate-binding site is contributed by Met-50. ATP-binding residues include Arg-125 and Thr-171. Gly-198 is a substrate binding site.

Belongs to the Thz kinase family. It depends on Mg(2+) as a cofactor.

The catalysed reaction is 5-(2-hydroxyethyl)-4-methylthiazole + ATP = 4-methyl-5-(2-phosphooxyethyl)-thiazole + ADP + H(+). The protein operates within cofactor biosynthesis; thiamine diphosphate biosynthesis; 4-methyl-5-(2-phosphoethyl)-thiazole from 5-(2-hydroxyethyl)-4-methylthiazole: step 1/1. Functionally, catalyzes the phosphorylation of the hydroxyl group of 4-methyl-5-beta-hydroxyethylthiazole (THZ). This is Hydroxyethylthiazole kinase from Salmonella paratyphi A (strain ATCC 9150 / SARB42).